The chain runs to 72 residues: Aurein-2.5 (72 aa).

The first 22 residues, 1 to 22, serve as a signal peptide directing secretion; sequence MAFLKKSLFLVLFLGLVSLSIC. The propeptide occupies 23-49; the sequence is EKEKRQNEEDEDENEAANHEEGSEEKR. The disordered stretch occupies residues 27–47; it reads RQNEEDEDENEAANHEEGSEE. Basic and acidic residues predominate over residues 38–47; that stretch reads AANHEEGSEE. L65 bears the Leucine amide mark. Residues 69–72 constitute a propeptide that is removed on maturation; the sequence is NDLE.

Belongs to the frog skin active peptide (FSAP) family. Aurein subfamily. As to quaternary structure, may be monomeric or may oligomerize as homodimers or homotrimers in Gram-positive and Gram-negative bacteria mimetic membranes. C-terminal amidation enhances antibacterial activity. This increase may be due to stabilization of the alpha-helical structure at the membrane interface. Expressed by the skin dorsal glands.

The protein localises to the secreted. It localises to the target cell membrane. Functionally, amphipathic alpha-helical antimicrobial peptide with moderate to potent activity against Gram-positive bacteria, Gram-negative bacteria and fungi. Also shows a weak activity against biofilm of both Gram-positive and Gram-negative bacteria. Probably acts by disturbing membrane functions with its amphipathic structure. Kills fungi via membranolytic action. Enhanced sterol levels in lipid composition membranes reduce interaction of this peptide with membranes, having a protective effect against the lytic ability of the peptide. Shows anticancer activity. In Ranoidea aurea (Green and golden bell frog), this protein is Aurein-2.5.